Here is a 216-residue protein sequence, read N- to C-terminus: Protein YabP (216 aa).

The chain is Protein YabP (yabP) from Escherichia coli (strain K12).